Here is a 627-residue protein sequence, read N- to C-terminus: 1-deoxy-D-xylulose-5-phosphate synthase (627 aa).

Thiamine diphosphate contacts are provided by residues histidine 80 and 121-123 (GHS). A Mg(2+)-binding site is contributed by aspartate 152. Thiamine diphosphate is bound by residues 153–154 (GA), asparagine 181, tyrosine 288, and glutamate 370. Residue asparagine 181 coordinates Mg(2+).

The protein belongs to the transketolase family. DXPS subfamily. Homodimer. Mg(2+) serves as cofactor. The cofactor is thiamine diphosphate.

The catalysed reaction is D-glyceraldehyde 3-phosphate + pyruvate + H(+) = 1-deoxy-D-xylulose 5-phosphate + CO2. It participates in metabolic intermediate biosynthesis; 1-deoxy-D-xylulose 5-phosphate biosynthesis; 1-deoxy-D-xylulose 5-phosphate from D-glyceraldehyde 3-phosphate and pyruvate: step 1/1. Functionally, catalyzes the acyloin condensation reaction between C atoms 2 and 3 of pyruvate and glyceraldehyde 3-phosphate to yield 1-deoxy-D-xylulose-5-phosphate (DXP). The protein is 1-deoxy-D-xylulose-5-phosphate synthase of Vibrio atlanticus (strain LGP32) (Vibrio splendidus (strain Mel32)).